We begin with the raw amino-acid sequence, 145 residues long: MLTRLVLSAHLSSTTSPPWTHAAISWELDNVLMPSPRIWPQVTPTGRSASVRSEGNTSSLWNFSAGQDVHAIVTRTCESVLSSAVYTHGCGCVRSATNITCQSSGQQRQAARQEEENSICKAHDSREGRLGYPLSAHQPGSGGPN.

Positions 1-22 are cleaved as a signal peptide; the sequence is MLTRLVLSAHLSSTTSPPWTHA. Asn-98 carries an N-linked (GlcNAc...) asparagine glycan. The segment at 103-145 is disordered; it reads SSGQQRQAARQEEENSICKAHDSREGRLGYPLSAHQPGSGGPN.

It is found in the secreted. This is an uncharacterized protein from Homo sapiens (Human).